Reading from the N-terminus, the 86-residue chain is Small ribosomal subunit protein bS20 (86 aa).

A disordered region spans residues 1–23 (MANIKSSKKDSIKSRKKKKLNAS).

This sequence belongs to the bacterial ribosomal protein bS20 family.

Its function is as follows. Binds directly to 16S ribosomal RNA. In Buchnera aphidicola subsp. Baizongia pistaciae (strain Bp), this protein is Small ribosomal subunit protein bS20.